The sequence spans 183 residues: Threonylcarbamoyl-AMP synthase (183 aa).

One can recognise a YrdC-like domain in the interval 1–183 (MNITQIIEKL…LFTNQLVRQG (183 aa)).

Belongs to the SUA5 family. TsaC subfamily.

The protein localises to the cytoplasm. It carries out the reaction L-threonine + hydrogencarbonate + ATP = L-threonylcarbamoyladenylate + diphosphate + H2O. Its function is as follows. Required for the formation of a threonylcarbamoyl group on adenosine at position 37 (t(6)A37) in tRNAs that read codons beginning with adenine. Catalyzes the conversion of L-threonine, HCO(3)(-)/CO(2) and ATP to give threonylcarbamoyl-AMP (TC-AMP) as the acyladenylate intermediate, with the release of diphosphate. The protein is Threonylcarbamoyl-AMP synthase of Histophilus somni (strain 129Pt) (Haemophilus somnus).